A 313-amino-acid polypeptide reads, in one-letter code: Metaxin-3 (313 aa).

Residues 280 to 313 (EKMDDNLRSSPQHRPHRHEAKPSAPASDRNSTPA) form a disordered region.

The protein belongs to the metaxin family. As to quaternary structure, part of a large protein complex spanning both mitochondrial membranes termed the mitochondrial intermembrane space bridging (MIB) complex.

It is found in the mitochondrion. The protein resides in the mitochondrion outer membrane. Functionally, could function in transport of proteins into the mitochondrion. The chain is Metaxin-3 (mtx3) from Danio rerio (Zebrafish).